A 103-amino-acid polypeptide reads, in one-letter code: MKSLLPLAILAALAVAALCYESHESMESYEVSPFTTRRNANTFISPQQRWHAKAQERVRELNKPAQEINREACDDYKLCERYALIYGYNAAYNRYFRQRRGAK.

A signal peptide spans 1-19; the sequence is MKSLLPLAILAALAVAALC. Glu-21 carries the post-translational modification 4-carboxyglutamate. Residues Ser-22, Ser-25, and Ser-28 each carry the phosphoserine modification. Residues 51 to 97 enclose the Gla domain; that stretch reads HAKAQERVRELNKPAQEINREACDDYKLCERYALIYGYNAAYNRYFR. 4 positions are modified to 4-carboxyglutamate: Glu-56, Glu-60, Glu-67, and Glu-71. A disulfide bridge links Cys-73 with Cys-79.

Belongs to the osteocalcin/matrix Gla protein family. Post-translationally, requires vitamin K-dependent gamma-carboxylation for its function.

The protein localises to the secreted. In terms of biological role, associates with the organic matrix of bone and cartilage. Thought to act as an inhibitor of bone formation. The protein is Matrix Gla protein (Mgp) of Rattus norvegicus (Rat).